A 256-amino-acid chain; its full sequence is tRNA (guanine-N(7)-)-methyltransferase (256 aa).

The segment covering 1-11 has biased composition (polar residues); that stretch reads MHPQDASTEQT. The interval 1 to 35 is disordered; the sequence is MHPQDASTEQTPVDDDQVESSQPVHAPEDVAHPRR. Residues glutamate 85, glutamate 110, aspartate 137, and aspartate 160 each contribute to the S-adenosyl-L-methionine site. The active site involves aspartate 160. A substrate-binding site is contributed by lysine 164. Residues 166–171 form an interaction with RNA region; that stretch reads RHNKRR. Substrate contacts are provided by residues aspartate 196 and 234-237; that span reads TKFE.

The protein belongs to the class I-like SAM-binding methyltransferase superfamily. TrmB family.

It catalyses the reaction guanosine(46) in tRNA + S-adenosyl-L-methionine = N(7)-methylguanosine(46) in tRNA + S-adenosyl-L-homocysteine. It functions in the pathway tRNA modification; N(7)-methylguanine-tRNA biosynthesis. In terms of biological role, catalyzes the formation of N(7)-methylguanine at position 46 (m7G46) in tRNA. In Cupriavidus pinatubonensis (strain JMP 134 / LMG 1197) (Cupriavidus necator (strain JMP 134)), this protein is tRNA (guanine-N(7)-)-methyltransferase.